A 143-amino-acid chain; its full sequence is Histone H2A.z (143 aa).

The protein belongs to the histone H2A family. As to quaternary structure, the nucleosome is a histone octamer containing two molecules each of H2A, H2B, H3 and H4 assembled in one H3-H4 heterotetramer and two H2A-H2B heterodimers. The octamer wraps approximately 147 bp of DNA.

The protein resides in the nucleus. It localises to the chromosome. Functionally, core component of nucleosome which plays a central role in DNA double strand break (DSB) repair. Nucleosomes wrap and compact DNA into chromatin, limiting DNA accessibility to the cellular machineries which require DNA as a template. Histones thereby play a central role in transcription regulation, DNA repair, DNA replication and chromosomal stability. DNA accessibility is regulated via a complex set of post-translational modifications of histones, also called histone code, and nucleosome remodeling. The polypeptide is Histone H2A.z (H2AZ) (Dictyostelium discoideum (Social amoeba)).